The sequence spans 173 residues: 2-C-methyl-D-erythritol 2,4-cyclodiphosphate synthase (173 aa).

A divalent metal cation contacts are provided by Asp-17 and His-19. 4-CDP-2-C-methyl-D-erythritol 2-phosphate-binding positions include 17-19 (DVH) and 49-50 (HS). His-57 is an a divalent metal cation binding site. Residues 76–80 (FPNTD), 147–150 (TTTE), Phe-154, and Arg-157 each bind 4-CDP-2-C-methyl-D-erythritol 2-phosphate.

The protein belongs to the IspF family. Homotrimer. Requires a divalent metal cation as cofactor.

The catalysed reaction is 4-CDP-2-C-methyl-D-erythritol 2-phosphate = 2-C-methyl-D-erythritol 2,4-cyclic diphosphate + CMP. The protein operates within isoprenoid biosynthesis; isopentenyl diphosphate biosynthesis via DXP pathway; isopentenyl diphosphate from 1-deoxy-D-xylulose 5-phosphate: step 4/6. Functionally, involved in the biosynthesis of isopentenyl diphosphate (IPP) and dimethylallyl diphosphate (DMAPP), two major building blocks of isoprenoid compounds. Catalyzes the conversion of 4-diphosphocytidyl-2-C-methyl-D-erythritol 2-phosphate (CDP-ME2P) to 2-C-methyl-D-erythritol 2,4-cyclodiphosphate (ME-CPP) with a corresponding release of cytidine 5-monophosphate (CMP). The sequence is that of 2-C-methyl-D-erythritol 2,4-cyclodiphosphate synthase from Ehrlichia chaffeensis (strain ATCC CRL-10679 / Arkansas).